Reading from the N-terminus, the 292-residue chain is D-galactarolactone isomerase (292 aa).

Belongs to the metallo-dependent hydrolases superfamily. Requires Does not require a metal cofactor. as cofactor.

The catalysed reaction is D-galactaro-1,5-lactone = D-galactaro-1,4-lactone. Its pathway is carbohydrate acid metabolism; D-galacturonate degradation via prokaryotic oxidative pathway. Functionally, catalyzes the isomerization of D-galactaro-1,5-lactone to D-galactaro-1,4-lactone. This is a step in the oxidative degradation pathway of D-galacturonate, which allows A.tumefaciens to utilize D-galacturonate as a sole carbon source. This Agrobacterium fabrum (strain C58 / ATCC 33970) (Agrobacterium tumefaciens (strain C58)) protein is D-galactarolactone isomerase.